An 859-amino-acid polypeptide reads, in one-letter code: MDVRRLKVNELREELQRRGLDTRGLKAELAERLLAALEAEEPEDERELEADDDPGLPGHNNEEVETEGGSELEGTAQPPPPGLQPHPEPGGYSGPDGHYVMDNITRQNQFYETPVIKQENESSYDRRPLDMEPQQQVYHPELKTEMKQEAPPSFLPPEASQLKTDRPQFQNRKRPFEENRGRGYFEHREDRRGRSPQPPAEEDEDDFDDTLVAIDTYNCDLHFKVARDRSSGYPLTIEGFAYLWSGARASYGVRRGRVCFEMKINEEISVKHLPSTEPDPHVVRIGWSLDSCSTQLGEEPFSYGYGGTGKKSTNSRFENYGDKFAENDVIGCFADFECGNDVELSFTKNGKWMGIAFRIQKEALGGQALYPHVLVKNCAVEFNFGQRAEPYCSVLPGFTFIQHLPLSERIRGTIGPKSKAECEILMMVGLPAAGKTTWAIKHAASNPSKKYNILGTNAIMDKMRVMGLRRQRNYAGRWDVLIQQATQCLNRLIQIAARKKRNYILDQTNVYGSAQRRKMRPFEGFQRKAIVICPTDEDLKDRTVKRTDEEGKDVPDHAVLEMKANFTLPDVGDFLDEVLFIELQREEADKLVRQYNEEGRKAGPPPEKRFDSRGGGFRGRGGGGGFQRYDNRGPPGGNRGGFQNRGGGGGSGGGGGNYRGGFNRSGGGGYNQNRWGNNNRDNNNSNNRGNYNRAPQQQPPPQQPPPPQPPPQQPPPPPSYSPARNPPGASSYNKNSNIPGSSANTSTPTVSSYTPPQPSYSQPPYNQGGYTQGYTAPPPPPPPPPAYNYGSYGPYNPAPYTPPPPPTAQTYPQPSYNQYQQYAQQWSQYYQNQSQWPPYYGNYDYGGYSGSTQGGTSTQ.

A necessary for interaction with HRMT1L1 region spans residues 1–103; it reads MDVRRLKVNE…GPDGHYVMDN (103 aa). Residues 3–37 enclose the SAP domain; sequence VRRLKVNELREELQRRGLDTRGLKAELAERLLAAL. The disordered stretch occupies residues 36–131; sequence ALEAEEPEDE…SSYDRRPLDM (96 aa). The segment covering 38-54 has biased composition (acidic residues); sequence EAEEPEDERELEADDDP. Residues 77 to 88 are compositionally biased toward pro residues; sequence QPPPPGLQPHPE. Residue K117 forms a Glycyl lysine isopeptide (Lys-Gly) (interchain with G-Cter in SUMO1); alternate linkage. K117 is covalently cross-linked (Glycyl lysine isopeptide (Lys-Gly) (interchain with G-Cter in SUMO2); alternate). Residues 118–130 are compositionally biased toward basic and acidic residues; it reads QENESSYDRRPLD. A Glycyl lysine isopeptide (Lys-Gly) (interchain with G-Cter in SUMO1); alternate cross-link involves residue K143. K143 participates in a covalent cross-link: Glycyl lysine isopeptide (Lys-Gly) (interchain with G-Cter in SUMO2); alternate. Positions 146–206 are disordered; that stretch reads MKQEAPPSFL…QPPAEEDEDD (61 aa). Glycyl lysine isopeptide (Lys-Gly) (interchain with G-Cter in SUMO2) cross-links involve residues K147 and K163. The segment covering 174 to 193 has biased composition (basic and acidic residues); the sequence is RPFEENRGRGYFEHREDRRG. The region spanning 192-389 is the B30.2/SPRY domain; the sequence is RGRSPQPPAE…VEFNFGQRAE (198 aa). S195 carries the phosphoserine modification. T210 is subject to Phosphothreonine. A necessary for interaction with TP53 region spans residues 214–859; sequence IDTYNCDLHF…GSTQGGTSTQ (646 aa). Glycyl lysine isopeptide (Lys-Gly) (interchain with G-Cter in SUMO2) cross-links involve residues K271 and K450. Residues 457 to 595 are necessary for interaction with BRD7 and transcriptional activation; that stretch reads NAIMDKMRVM…EEADKLVRQY (139 aa). Position 513 is a phosphoserine (S513). K540 is covalently cross-linked (Glycyl lysine isopeptide (Lys-Gly) (interchain with G-Cter in SUMO2)). Residues 595 to 612 show a composition bias toward basic and acidic residues; it reads YNEEGRKAGPPPEKRFDS. Residues 595 to 814 are disordered; it reads YNEEGRKAGP…PPTAQTYPQP (220 aa). 5 consecutive repeat copies span residues 613 to 615, 620 to 622, 639 to 641, 645 to 647, and 659 to 661. 2 stretches are compositionally biased toward gly residues: residues 613–626 and 634–670; these read RGGG…GGGF and PPGG…GGGY. A 5 X 3 AA repeats of R-G-G region spans residues 613–661; that stretch reads RGGGFRGRGGGGGFQRYDNRGPPGGNRGGFQNRGGGGGSGGGGGNYRGG. Residues 613-661 are necessary for transcription repression; that stretch reads RGGGFRGRGGGGGFQRYDNRGPPGGNRGGFQNRGGGGGSGGGGGNYRGG. Position 639 is an asymmetric dimethylarginine (R639). 2 positions are modified to asymmetric dimethylarginine; alternate: R645 and R659. Residues R645 and R659 each carry the omega-N-methylarginine; alternate modification. An omega-N-methylarginine mark is found at R664 and R674. Residues 671–696 are compositionally biased toward low complexity; the sequence is NQNRWGNNNRDNNNSNNRGNYNRAPQ. Residues 697–720 are compositionally biased toward pro residues; that stretch reads QQPPPQQPPPPQPPPQQPPPPPSY. S721 is subject to Phosphoserine. Residues 728 to 744 show a composition bias toward polar residues; that stretch reads GASSYNKNSNIPGSSAN. Residues 745–775 show a composition bias toward low complexity; the sequence is TSTPTVSSYTPPQPSYSQPPYNQGGYTQGYT. Pro residues-rich tracts occupy residues 776 to 786 and 796 to 807; these read APPPPPPPPPA and NPAPYTPPPPPT.

Interacts with BRD7, PRMT2, TP53 and NXF1. Associates with histones and BRD7. Post-translationally, methylated.

It localises to the nucleus. Acts as a basic transcriptional regulator. Represses basic transcription driven by several virus and cellular promoters. When associated with BRD7, activates transcription of glucocorticoid-responsive promoter in the absence of ligand-stimulation. Also plays a role in mRNA processing and transport. Binds avidly to poly(G) and poly(C) RNA homopolymers in vitro. The polypeptide is Heterogeneous nuclear ribonucleoprotein U-like protein 1 (Hnrnpul1) (Mus musculus (Mouse)).